We begin with the raw amino-acid sequence, 230 residues long: Urease accessory protein UreF (230 aa).

The protein belongs to the UreF family. UreD, UreF and UreG form a complex that acts as a GTP-hydrolysis-dependent molecular chaperone, activating the urease apoprotein by helping to assemble the nickel containing metallocenter of UreC. The UreE protein probably delivers the nickel.

It localises to the cytoplasm. Its function is as follows. Required for maturation of urease via the functional incorporation of the urease nickel metallocenter. This is Urease accessory protein UreF from Chromohalobacter salexigens (strain ATCC BAA-138 / DSM 3043 / CIP 106854 / NCIMB 13768 / 1H11).